We begin with the raw amino-acid sequence, 527 residues long: Zinc finger C2HC domain-containing protein 1C (527 aa).

2 disordered regions span residues H18–K105 and V145–S170. Over residues N50–E61 the composition is skewed to polar residues. Residues R71 to C85 are compositionally biased toward basic residues. Positions Q93–G102 are enriched in low complexity. A coiled-coil region spans residues T207–Q254. 2 disordered regions span residues L264–Y316 and L352–L379. The span at F286–D298 shows a compositional bias: basic and acidic residues. Polar residues predominate over residues C301–Q312. Over residues E358–T374 the composition is skewed to low complexity. 2 C2HC/C3H-type zinc fingers span residues E378–S407 and D489–R518. Positions 382, 385, 397, 401, 493, 496, 508, and 512 each coordinate Zn(2+). Positions R507–S527 are disordered.

The protein belongs to the ZC2HC1 family. It depends on Zn(2+) as a cofactor.

This is Zinc finger C2HC domain-containing protein 1C (Zc2hc1c) from Mus musculus (Mouse).